Here is a 217-residue protein sequence, read N- to C-terminus: NADPH-dependent 3-demethoxyubiquinone 3-hydroxylase, mitochondrial (217 aa).

The transit peptide at 1-23 (MSAAGAIAAASVGRLRTGVRRPF) directs the protein to the mitochondrion. A run of 2 repeats spans residues 48–129 (AVDR…TALL) and 130–217 (GKEG…SERF). The tract at residues 48–217 (AVDRIIRVDH…SAAIYLSERF (170 aa)) is 2 X approximate tandem repeats. NADH is bound at residue Arg51. Fe cation-binding residues include Glu60, Glu90, His93, Glu142, Glu178, and His181. Tyr212 and Arg216 together coordinate NADH.

This sequence belongs to the COQ7 family. In terms of assembly, component of a multi-subunit COQ enzyme complex. Interacts with COQ8B and COQ6. Interacts with COQ9. Fe cation is required as a cofactor. As to expression, highly expressed in tissues with high energy demand such as heart, muscle, liver, and kidney.

Its subcellular location is the mitochondrion inner membrane. It catalyses the reaction a 5-methoxy-2-methyl-3-(all-trans-polyprenyl)benzoquinone + NADH + O2 = a 3-demethylubiquinone + NAD(+) + H2O. The protein operates within cofactor biosynthesis; ubiquinone biosynthesis. Its function is as follows. Catalyzes the hydroxylation of the 5-methoxy-2-methyl-3-(all-trans-polyprenyl)benzoquinone at the C6 position and participates in the biosynthesis of ubiquinone. Catalyzes the reaction through a substrate-mediated reduction pathway, whereby NADH shuttles electrons to 5-methoxy-2-methyl-3-(all-trans-decaprenyl)benzoquinone, which then transfers the electrons to the two Fe(3+) centers. The binding of 5-methoxy-2-methyl-3-(all-trans-polyprenyl)benzoquinone (DMQn) mediates reduction of the diiron center by nicotinamide adenine dinucleotide (NADH) and initiates oxygen activation for subsequent DMQ hydroxylation. The physiological substrates are 5-methoxy-2-methyl-3-(all-trans-nonaprenyl)benzoquinone (DMQ(9)) and 5-methoxy-2-methyl-3-(all-trans-decaprenyl)benzoquinone (DMQ(10)), however in vitro the enzyme does not have any specificity concerning the length of the polyprenyl tail, and accepts tails of various lengths with similar efficiency. Also has a structural role in the COQ enzyme complex, stabilizing other COQ polypeptides. Involved in lifespan determination in a ubiquinone-independent manner. Plays a role in modulating mitochondrial stress responses, acting in the nucleus, perhaps via regulating gene expression, independent of its characterized mitochondrial function in ubiquinone biosynthesis. The chain is NADPH-dependent 3-demethoxyubiquinone 3-hydroxylase, mitochondrial from Mus musculus (Mouse).